We begin with the raw amino-acid sequence, 189 residues long: Peptidyl-tRNA hydrolase (189 aa).

Residue Y14 coordinates tRNA. Catalysis depends on H19, which acts as the Proton acceptor. The tRNA site is built by F61, N63, and N109.

The protein belongs to the PTH family. Monomer.

Its subcellular location is the cytoplasm. It catalyses the reaction an N-acyl-L-alpha-aminoacyl-tRNA + H2O = an N-acyl-L-amino acid + a tRNA + H(+). Its function is as follows. Hydrolyzes ribosome-free peptidyl-tRNAs (with 1 or more amino acids incorporated), which drop off the ribosome during protein synthesis, or as a result of ribosome stalling. Catalyzes the release of premature peptidyl moieties from peptidyl-tRNA molecules trapped in stalled 50S ribosomal subunits, and thus maintains levels of free tRNAs and 50S ribosomes. The polypeptide is Peptidyl-tRNA hydrolase (Sulfurovum sp. (strain NBC37-1)).